Reading from the N-terminus, the 347-residue chain is Histidinol-phosphate aminotransferase (347 aa).

Residue lysine 209 is modified to N6-(pyridoxal phosphate)lysine.

It belongs to the class-II pyridoxal-phosphate-dependent aminotransferase family. Histidinol-phosphate aminotransferase subfamily. Homodimer. Requires pyridoxal 5'-phosphate as cofactor.

The enzyme catalyses L-histidinol phosphate + 2-oxoglutarate = 3-(imidazol-4-yl)-2-oxopropyl phosphate + L-glutamate. It participates in amino-acid biosynthesis; L-histidine biosynthesis; L-histidine from 5-phospho-alpha-D-ribose 1-diphosphate: step 7/9. This chain is Histidinol-phosphate aminotransferase, found in Geotalea daltonii (strain DSM 22248 / JCM 15807 / FRC-32) (Geobacter daltonii).